The chain runs to 374 residues: Serpin B8 (374 aa).

This sequence belongs to the serpin family. Ov-serpin subfamily.

Its subcellular location is the cytoplasm. In terms of biological role, has an important role in epithelial desmosome-mediated cell-cell adhesion. The protein is Serpin B8 (SERPINB8) of Homo sapiens (Human).